Reading from the N-terminus, the 407-residue chain is Probable protein S-acyltransferase 9 (407 aa).

Transmembrane regions (helical) follow at residues 28–48 and 62–82; these read WSIP…SVFV and GHVF…LLFL. A DHHC domain is found at 136–179; that stretch reads KYCDTCMLYRPPRCSHCSICNNCVERFDHHCPWRNYRYFFMFVS. C166 (S-palmitoyl cysteine intermediate) is an active-site residue. The next 2 membrane-spanning stretches (helical) occupy residues 174–194 and 217–237; these read FFMF…MSAL and AVML…LTGF. Residues 300–407 form a disordered region; sequence LATTWERPEE…RSYAAAEEGR (108 aa). The span at 346–356 shows a compositional bias: basic and acidic residues; the sequence is DTAHHKIDIDQ.

It belongs to the DHHC palmitoyltransferase family. In terms of tissue distribution, mainly expressed in seeds.

The protein resides in the cell membrane. The catalysed reaction is L-cysteinyl-[protein] + hexadecanoyl-CoA = S-hexadecanoyl-L-cysteinyl-[protein] + CoA. Its function is as follows. Palmitoyl acyltransferase. The protein is Probable protein S-acyltransferase 9 (PAT09) of Arabidopsis thaliana (Mouse-ear cress).